A 142-amino-acid polypeptide reads, in one-letter code: Large ribosomal subunit protein uL16 (142 aa).

Belongs to the universal ribosomal protein uL16 family. As to quaternary structure, part of the 50S ribosomal subunit.

Its function is as follows. Binds 23S rRNA and is also seen to make contacts with the A and possibly P site tRNAs. The polypeptide is Large ribosomal subunit protein uL16 (Pseudothermotoga lettingae (strain ATCC BAA-301 / DSM 14385 / NBRC 107922 / TMO) (Thermotoga lettingae)).